Here is a 394-residue protein sequence, read N- to C-terminus: Acetate kinase (394 aa).

Asparagine 7 contributes to the Mg(2+) binding site. An ATP-binding site is contributed by lysine 14. Arginine 88 serves as a coordination point for substrate. The active-site Proton donor/acceptor is aspartate 145. ATP-binding positions include histidine 205 to glycine 209, aspartate 279 to arginine 281, and glycine 327 to asparagine 331. Glutamate 379 is a Mg(2+) binding site.

It belongs to the acetokinase family. Homodimer. Requires Mg(2+) as cofactor. It depends on Mn(2+) as a cofactor.

The protein resides in the cytoplasm. The catalysed reaction is acetate + ATP = acetyl phosphate + ADP. The protein operates within metabolic intermediate biosynthesis; acetyl-CoA biosynthesis; acetyl-CoA from acetate: step 1/2. In terms of biological role, catalyzes the formation of acetyl phosphate from acetate and ATP. Can also catalyze the reverse reaction. This is Acetate kinase from Campylobacter lari (strain RM2100 / D67 / ATCC BAA-1060).